A 193-amino-acid chain; its full sequence is Peptidyl-tRNA hydrolase (193 aa).

Y17 contacts tRNA. The active-site Proton acceptor is H22. Y69, N71, and N117 together coordinate tRNA.

This sequence belongs to the PTH family. As to quaternary structure, monomer.

It is found in the cytoplasm. It carries out the reaction an N-acyl-L-alpha-aminoacyl-tRNA + H2O = an N-acyl-L-amino acid + a tRNA + H(+). Hydrolyzes ribosome-free peptidyl-tRNAs (with 1 or more amino acids incorporated), which drop off the ribosome during protein synthesis, or as a result of ribosome stalling. In terms of biological role, catalyzes the release of premature peptidyl moieties from peptidyl-tRNA molecules trapped in stalled 50S ribosomal subunits, and thus maintains levels of free tRNAs and 50S ribosomes. The polypeptide is Peptidyl-tRNA hydrolase (Leifsonia xyli subsp. xyli (strain CTCB07)).